The sequence spans 107 residues: uncharacterized protein (107 aa).

The region spanning K6–A107 is the Glutaredoxin domain. K23 provides a ligand contact to glutathione. C31 is a binding site for [2Fe-2S] cluster. Glutathione contacts are provided by residues R60 and A85 to D86.

This sequence belongs to the glutaredoxin family. Monothiol subfamily.

The protein localises to the plastid. It localises to the chloroplast. This is an uncharacterized protein from Porphyra purpurea (Red seaweed).